A 784-amino-acid polypeptide reads, in one-letter code: MPHTLWMVWVLGVIISLSKEESSNQASLSCDHNGICKGSSGSLNSIPSGLTEAVKSLDLSNNRITYISNSDLQRYVNLQALVLTSNGINTIEEDSFSSLGRLEHLDLSYNYLSNLSSSWFKPLSSLKFLNLLGNPYKTLGETSLFSHLTKLRILRVGNMDTFTKIQRKDFAGLTFLEELEIDASDLQSYEPKSLKSIQNVSHLILHMKQHILLLEIFVDLTSSVECLELRDTDLDTFHFSELSTGETNSLIKKFTFRNVKITDESLFQVMKLLSQISGLLELEFDDCTLNGVGDFRGSDNDRVIDPGKVETVTIRRLHIPQFYSFNDLSTLYPLTERVKRITVENSKVFLVPCLLSRHLKSLEYLDLSENLMVEEYLKNSACEDAWPSLQTLILRQNHLASLGKTGETLLTLKNLTNLDISKNTFHYMPETCQWPEKMKYLNLSSTRIHSVTGCIPKTLEILDISNNNLNLFSLNLPQLKELYISRNKLMTLPDASLLPMLLVLKISRNTITTFSKEQLDSFHTLKTLEAGGNNFICSCEFLSFTQEQQALAKVLVDWPANYLCDSPSHVRGQRVQDVRLSVSECHRAALVSGMCCALFLLILLMGVLCHRFHGLWYMKMMWAWLQAKRKPRKAPNRDICYDAFVSYSERDAYWVENLMVQELENFNPPFKLCLHKRDFIPGKWIIDNIIDSIEKSHKTVFVLSENFVKSEWCKYELDFSHFRLFDENNDAAILVLLEPIEKKAIPQRFCKLRKIMNTKTYLEWPMDEARQEGFWVNLRAAIKS.

The signal sequence occupies residues 1–18 (MPHTLWMVWVLGVIISLS). Topologically, residues 19–587 (KEESSNQASL…VRLSVSECHR (569 aa)) are extracellular. Cysteine 30 and cysteine 36 are oxidised to a cystine. 19 LRR repeats span residues 54–77 (VKSLDLSNNRITYISNSDLQRYVN), 78–101 (LQALVLTSNGINTIEEDSFSSLGR), 102–125 (LEHLDLSYNYLSNLSSSWFKPLSS), 126–150 (LKFLNLLGNPYKTLGETSLFSHLTK), 151–175 (LRILRVGNMDTFTKIQRKDFAGLTF), 176–199 (LEELEIDASDLQSYEPKSLKSIQN), 200–223 (VSHLILHMKQHILLLEIFVDLTSS), 224–250 (VECLELRDTDLDTFHFSELSTGETNSL), 251–278 (IKKFTFRNVKITDESLFQVMKLLSQISG), 279–308 (LLELEFDDCTLNGVGDFRGSDNDRVIDPGK), 309–337 (VETVTIRRLHIPQFYSFNDLSTLYPLTER), 338–361 (VKRITVENSKVFLVPCLLSRHLKS), 362–388 (LEYLDLSENLMVEEYLKNSACEDAWPS), 389–414 (LQTLILRQNHLASLGKTGETLLTLKN), 415–437 (LTNLDISKNTFHYMPETCQWPEK), 438–457 (MKYLNLSSTRIHSVTGCIPK), 458–478 (TLEILDISNNNLNLFSLNLPQ), 479–500 (LKELYISRNKLMTLPDASLLPM), and 501–524 (LLVLKISRNTITTFSKEQLDSFHT). Asparagine 114 is a glycosylation site (N-linked (GlcNAc...) asparagine). An N-linked (GlcNAc...) asparagine glycan is attached at asparagine 199. A disulfide bond links cysteine 353 and cysteine 382. Asparagine 414 carries N-linked (GlcNAc...) asparagine glycosylation. Cysteine 432 and cysteine 454 are joined by a disulfide. N-linked (GlcNAc...) asparagine glycosylation is present at asparagine 442. In terms of domain architecture, LRRCT spans 525 to 579 (LKTLEAGGNNFICSCEFLSFTQEQQALAKVLVDWPANYLCDSPSHVRGQRVQDVR). The helical transmembrane segment at 588 to 608 (AALVSGMCCALFLLILLMGVL) threads the bilayer. Topologically, residues 609–784 (CHRFHGLWYM…WVNLRAAIKS (176 aa)) are cytoplasmic. The TIR domain occupies 639–782 (ICYDAFVSYS…GFWVNLRAAI (144 aa)). Lysine 754 participates in a covalent cross-link: Glycyl lysine isopeptide (Lys-Gly) (interchain with G-Cter in ubiquitin). The short motif at 761-778 (YLEWPMDEARQEGFWVNL) is the ATG16L1-binding motif element.

This sequence belongs to the Toll-like receptor family. Interacts with LY96, TLR1 and TLR6 (via extracellular domain). TLR2 seems to exist in heterodimers with either TLR1 or TLR6 before stimulation by the ligand. The heterodimers form bigger oligomers in response to their corresponding ligands as well as further heterotypic associations with other receptors such as CD14 and/or CD36. Binds MYD88 (via TIR domain). Interacts with TICAM1. Interacts with CNPY3. Interacts with ATG16L1. Interacts with PPP1R11. Interacts with TICAM2. Interacts with TIRAP. Post-translationally, ubiquitinated at Lys-754 by PPP1R11, leading to its degradation. Deubiquitinated by USP2. Glycosylation of Asn-442 is critical for secretion of the N-terminal ectodomain of TLR2.

It localises to the membrane. The protein localises to the cytoplasmic vesicle. It is found in the phagosome membrane. Its subcellular location is the membrane raft. Cooperates with LY96 to mediate the innate immune response to bacterial lipoproteins and other microbial cell wall components. Cooperates with TLR1 or TLR6 to mediate the innate immune response to bacterial lipoproteins or lipopeptides. Acts via MYD88 and TRAF6, leading to NF-kappa-B activation, cytokine secretion and the inflammatory response. May also promote apoptosis in response to lipoproteins. Forms activation clusters composed of several receptors depending on the ligand, these clusters trigger signaling from the cell surface and subsequently are targeted to the Golgi in a lipid-raft dependent pathway. Forms the cluster TLR2:TLR6:CD14:CD36 in response to diacylated lipopeptides and TLR2:TLR1:CD14 in response to triacylated lipopeptides. The polypeptide is Toll-like receptor 2 (TLR2) (Macaca fascicularis (Crab-eating macaque)).